The following is a 318-amino-acid chain: tRNA U34 carboxymethyltransferase (318 aa).

Carboxy-S-adenosyl-L-methionine-binding positions include lysine 85, tryptophan 99, lysine 104, glycine 124, 175-176, methionine 190, tyrosine 194, and arginine 311; that span reads LD.

Belongs to the class I-like SAM-binding methyltransferase superfamily. CmoB family. Homotetramer.

The enzyme catalyses carboxy-S-adenosyl-L-methionine + 5-hydroxyuridine(34) in tRNA = 5-carboxymethoxyuridine(34) in tRNA + S-adenosyl-L-homocysteine + H(+). Its function is as follows. Catalyzes carboxymethyl transfer from carboxy-S-adenosyl-L-methionine (Cx-SAM) to 5-hydroxyuridine (ho5U) to form 5-carboxymethoxyuridine (cmo5U) at position 34 in tRNAs. The sequence is that of tRNA U34 carboxymethyltransferase from Ruthia magnifica subsp. Calyptogena magnifica.